Consider the following 541-residue polypeptide: Berberine bridge enzyme-like 24 (541 aa).

The signal sequence occupies residues 1-32 (MGNSKPLPTISCIIVSVLYFSFYCITPTSSSA). Cysteine 41 and cysteine 105 form a disulfide bridge. Asparagine 62 carries N-linked (GlcNAc...) asparagine glycosylation. Residues 83-259 (SMPKPGFIFR…LAWKIKLVPV (177 aa)) form the FAD-binding PCMH-type domain. A cross-link (6-(S-cysteinyl)-8alpha-(pros-histidyl)-FAD (His-Cys)) is located at residues 120–184 (HDFEALSYVS…KIHGFPAGLC (65 aa)). Residues asparagine 309, asparagine 408, and asparagine 435 are each glycosylated (N-linked (GlcNAc...) asparagine).

Belongs to the oxygen-dependent FAD-linked oxidoreductase family. The cofactor is FAD. In terms of processing, the FAD cofactor is bound via a bicovalent 6-S-cysteinyl, 8alpha-N1-histidyl FAD linkage.

The protein localises to the secreted. It localises to the cell wall. In Arabidopsis thaliana (Mouse-ear cress), this protein is Berberine bridge enzyme-like 24.